The primary structure comprises 602 residues: Chaperone protein DnaK (602 aa).

Position 199 is a phosphothreonine; by autocatalysis (Thr199).

It belongs to the heat shock protein 70 family.

Functionally, acts as a chaperone. In Carsonella ruddii (strain PV), this protein is Chaperone protein DnaK.